Consider the following 416-residue polypeptide: S-adenosylmethionine synthase (416 aa).

Position 16 (histidine 16) interacts with ATP. Aspartate 18 provides a ligand contact to Mg(2+). Glutamate 44 contributes to the K(+) binding site. Residues glutamate 57 and glutamine 100 each coordinate L-methionine. A flexible loop region spans residues glutamine 100–alanine 110. ATP-binding positions include aspartate 175 to lysine 177, lysine 251 to phenylalanine 252, aspartate 260, arginine 266 to lysine 267, alanine 283, and lysine 287. Aspartate 260 contributes to the L-methionine binding site. Lysine 291 lines the L-methionine pocket.

This sequence belongs to the AdoMet synthase family. In terms of assembly, homotetramer; dimer of dimers. Mg(2+) is required as a cofactor. K(+) serves as cofactor.

It localises to the cytoplasm. The enzyme catalyses L-methionine + ATP + H2O = S-adenosyl-L-methionine + phosphate + diphosphate. It participates in amino-acid biosynthesis; S-adenosyl-L-methionine biosynthesis; S-adenosyl-L-methionine from L-methionine: step 1/1. In terms of biological role, catalyzes the formation of S-adenosylmethionine (AdoMet) from methionine and ATP. The overall synthetic reaction is composed of two sequential steps, AdoMet formation and the subsequent tripolyphosphate hydrolysis which occurs prior to release of AdoMet from the enzyme. The chain is S-adenosylmethionine synthase from Microcystis aeruginosa (strain NIES-843 / IAM M-2473).